The sequence spans 237 residues: Large ribosomal subunit protein uL1 (237 aa).

The protein belongs to the universal ribosomal protein uL1 family. In terms of assembly, part of the 50S ribosomal subunit.

Binds directly to 23S rRNA. The L1 stalk is quite mobile in the ribosome, and is involved in E site tRNA release. In terms of biological role, protein L1 is also a translational repressor protein, it controls the translation of the L11 operon by binding to its mRNA. This chain is Large ribosomal subunit protein uL1, found in Solibacter usitatus (strain Ellin6076).